The following is a 115-amino-acid chain: Large ribosomal subunit protein bL19 (115 aa).

The protein belongs to the bacterial ribosomal protein bL19 family.

This protein is located at the 30S-50S ribosomal subunit interface and may play a role in the structure and function of the aminoacyl-tRNA binding site. The sequence is that of Large ribosomal subunit protein bL19 from Lacticaseibacillus casei (strain BL23) (Lactobacillus casei).